The sequence spans 445 residues: Phosphoglucosamine mutase (445 aa).

Ser102 serves as the catalytic Phosphoserine intermediate. Mg(2+) contacts are provided by Ser102, Asp241, Asp243, and Asp245. Phosphoserine is present on Ser102.

This sequence belongs to the phosphohexose mutase family. It depends on Mg(2+) as a cofactor. In terms of processing, activated by phosphorylation.

It carries out the reaction alpha-D-glucosamine 1-phosphate = D-glucosamine 6-phosphate. Catalyzes the conversion of glucosamine-6-phosphate to glucosamine-1-phosphate. The protein is Phosphoglucosamine mutase of Salmonella paratyphi A (strain ATCC 9150 / SARB42).